A 109-amino-acid chain; its full sequence is Small ribosomal subunit protein uS17 (109 aa).

The protein belongs to the universal ribosomal protein uS17 family. In terms of assembly, part of the 30S ribosomal subunit.

One of the primary rRNA binding proteins, it binds specifically to the 5'-end of 16S ribosomal RNA. In Methanococcus vannielii, this protein is Small ribosomal subunit protein uS17.